A 158-amino-acid chain; its full sequence is SsrA-binding protein (158 aa).

This sequence belongs to the SmpB family.

It is found in the cytoplasm. Functionally, required for rescue of stalled ribosomes mediated by trans-translation. Binds to transfer-messenger RNA (tmRNA), required for stable association of tmRNA with ribosomes. tmRNA and SmpB together mimic tRNA shape, replacing the anticodon stem-loop with SmpB. tmRNA is encoded by the ssrA gene; the 2 termini fold to resemble tRNA(Ala) and it encodes a 'tag peptide', a short internal open reading frame. During trans-translation Ala-aminoacylated tmRNA acts like a tRNA, entering the A-site of stalled ribosomes, displacing the stalled mRNA. The ribosome then switches to translate the ORF on the tmRNA; the nascent peptide is terminated with the 'tag peptide' encoded by the tmRNA and targeted for degradation. The ribosome is freed to recommence translation, which seems to be the essential function of trans-translation. The chain is SsrA-binding protein from Pseudoalteromonas atlantica (strain T6c / ATCC BAA-1087).